A 120-amino-acid polypeptide reads, in one-letter code: NAD(P)H-quinone oxidoreductase subunit 3 (120 aa).

The next 3 helical transmembrane spans lie at Y7–A27, M64–V84, and L89–V109.

Belongs to the complex I subunit 3 family. In terms of assembly, NDH-1 can be composed of about 15 different subunits; different subcomplexes with different compositions have been identified which probably have different functions.

It is found in the cellular thylakoid membrane. It catalyses the reaction a plastoquinone + NADH + (n+1) H(+)(in) = a plastoquinol + NAD(+) + n H(+)(out). The enzyme catalyses a plastoquinone + NADPH + (n+1) H(+)(in) = a plastoquinol + NADP(+) + n H(+)(out). In terms of biological role, NDH-1 shuttles electrons from an unknown electron donor, via FMN and iron-sulfur (Fe-S) centers, to quinones in the respiratory and/or the photosynthetic chain. The immediate electron acceptor for the enzyme in this species is believed to be plastoquinone. Couples the redox reaction to proton translocation, and thus conserves the redox energy in a proton gradient. Cyanobacterial NDH-1 also plays a role in inorganic carbon-concentration. This chain is NAD(P)H-quinone oxidoreductase subunit 3, found in Crocosphaera subtropica (strain ATCC 51142 / BH68) (Cyanothece sp. (strain ATCC 51142)).